The sequence spans 1030 residues: Probable serine/threonine-protein kinase SIS8 (1030 aa).

Polar residues-rich tracts occupy residues 44–58 (PNQS…STTK) and 399–419 (YSAS…NGIE). Disordered stretches follow at residues 44-84 (PNQS…PEIK), 399-474 (YSAS…KAPF), 555-625 (TVES…ASST), and 689-736 (LGSN…SDCD). Basic and acidic residues-rich tracts occupy residues 426–435 (TEFRTGEHRS), 458–471 (ISRE…KVEK), and 560–580 (NSTE…EGRH). The span at 613 to 625 (SQSDSSHSEASST) shows a compositional bias: low complexity. The Protein kinase domain maps to 748 to 1003 (ITVGERIGLG…AEIMASLKRL (256 aa)). Residues 754–762 (IGLGSYGEV) and K775 contribute to the ATP site. D871 serves as the catalytic Proton acceptor. Positions 1007 to 1023 (VTGSNIPRPVPSSSSLP) are enriched in polar residues. The interval 1007–1030 (VTGSNIPRPVPSSSSLPTEHEQKD) is disordered.

The protein belongs to the protein kinase superfamily. Ser/Thr protein kinase family. As to quaternary structure, interacts with UGT72E1. As to expression, expressed roots, rosette and cauline leaves, and at lower levels in flowers and siliques.

Its subcellular location is the nucleus. It carries out the reaction L-seryl-[protein] + ATP = O-phospho-L-seryl-[protein] + ADP + H(+). The enzyme catalyses L-threonyl-[protein] + ATP = O-phospho-L-threonyl-[protein] + ADP + H(+). Acts as a negative regulator of salt tolerance. Mediates sugar response during early seedling development. The protein is Probable serine/threonine-protein kinase SIS8 of Arabidopsis thaliana (Mouse-ear cress).